The chain runs to 1013 residues: Antigenic heat-stable 120 kDa protein (1013 aa).

Disordered stretches follow at residues 1-73 (DTSE…TSDP) and 348-396 (GQSK…PQSQ). The segment covering 12–27 (EYTEEQKQKLEQEQKE) has biased composition (basic and acidic residues). Residues 47–61 (SASSAQSTPSISALS) show a composition bias toward low complexity. Polar residues-rich tracts occupy residues 62-73 (GNISPDSQTSDP), 348-373 (GQSKEQPLITPQQTASSSVESPQYKQ), and 380-396 (PTNQPLQPETSQMPQSQ).

Its subcellular location is the cytoplasm. The sequence is that of Antigenic heat-stable 120 kDa protein (sca4) from Rickettsia rhipicephali.